The primary structure comprises 2291 residues: Protein Ycf2 (2291 aa).

1645–1652 (GSIGTGRS) contacts ATP.

Belongs to the Ycf2 family.

It localises to the plastid. Its subcellular location is the chloroplast stroma. Its function is as follows. Probable ATPase of unknown function. Its presence in a non-photosynthetic plant (Epifagus virginiana) and experiments in tobacco indicate that it has an essential function which is probably not related to photosynthesis. The chain is Protein Ycf2 from Olimarabidopsis pumila (Dwarf rocket).